The sequence spans 1182 residues: Tyrosine-protein kinase ABL2 (1182 aa).

Positions 1–42 (MGQQVGRVGEAPGLQQPQPRGIRGSSAARPSGRRRDPAGRTA) are disordered. Gly-2 carries N-myristoyl glycine lipidation. The interval 2 to 106 (GQQVGRVGEA…SKENLLGATE (105 aa)) is CAP. A compositionally biased stretch (low complexity) spans 20-30 (RGIRGSSAARP). Ser-97 carries the post-translational modification Phosphoserine. An SH3 domain is found at 107–167 (SDPNLFVALY…PSNYITPVNS (61 aa)). A phosphotyrosine mark is found at Tyr-116, Tyr-161, Tyr-174, Tyr-185, Tyr-218, and Tyr-231. In terms of domain architecture, SH2 spans 173–263 (WYHGPVSRSA…GLVTTLHYPA (91 aa)). Tyr-261 bears the Phosphotyrosine; by ABL1 and autocatalysis mark. Tyr-272 carries the phosphotyrosine; by autocatalysis modification. Ser-275 carries the post-translational modification Phosphoserine. One can recognise a Protein kinase domain in the interval 288–539 (ITMKHKLGGG…PSFAETHQAF (252 aa)). An ATP-binding site is contributed by 294–302 (LGGGQYGEV). Residues Tyr-299 and Tyr-303 each carry the phosphotyrosine modification. Residues Lys-317 and 362–368 (EYMPYGN) contribute to the ATP site. Catalysis depends on Asp-409, which acts as the Proton acceptor. The short motif at 427 to 451 (DFGLSRLMTGDTYTAHAGAKFPIKW) is the Kinase activation loop element. The residue at position 439 (Tyr-439) is a Phosphotyrosine; by autocatalysis and SRC-type Tyr-kinases. Residue Tyr-459 is modified to Phosphotyrosine. Tyr-568 carries the post-translational modification Phosphotyrosine; by autocatalysis. Residues Ser-606, Ser-621, Ser-632, Ser-634, and Ser-656 each carry the phosphoserine modification. 2 disordered regions span residues 612–642 (IRSTQASSGSPALPRKQRDKSPSSLLEDAKE) and 655–674 (SSFMKKRNAPTPPKRSSSFR). The Nuclear localization signal motif lies at 659 to 661 (KKR). Residues Ser-670, Ser-671, and Ser-672 each carry the phosphoserine modification. Position 684 is a phosphotyrosine; by autocatalysis (Tyr-684). Residues 695-930 (SLQNADGFSV…AVLPTTHNHK (236 aa)) are F-actin-binding. Tyr-719 carries the post-translational modification Phosphotyrosine. The segment at 765 to 796 (LRAGKPTASDDTSKPFPRSNSTSSMSSGLPEQ) is disordered. An N6-acetyllysine modification is found at Lys-778. The span at 782–793 (RSNSTSSMSSGL) shows a compositional bias: polar residues. The residue at position 785 (Ser-785) is a Phosphoserine. Residue Thr-802 is modified to Phosphothreonine. Over residues 809–825 (RSKLQLERTVSTSSQPE) the composition is skewed to polar residues. Positions 809 to 858 (RSKLQLERTVSTSSQPEENVDRANDMLPKKSEEGAAPARERPKAKLLPRG) are disordered. Ser-819 and Ser-822 each carry phosphoserine. Residues 827–851 (NVDRANDMLPKKSEEGAAPARERPK) are compositionally biased toward basic and acidic residues. Phosphoserine is present on residues Ser-915 and Ser-936. Residues 964–1059 (HQVTSSGDKD…TSSISPAKMA (96 aa)) are disordered. Positions 1020-1182 (EGGKKAAPGP…VQEISDVVQR (163 aa)) are F-actin-binding.

This sequence belongs to the protein kinase superfamily. Tyr protein kinase family. ABL subfamily. As to quaternary structure, interacts with PSMA7. Interacts with CTTN. Found in a complex with ABL1, ABL2, CRK and UNC119; leading to the inhibition of CRK phosphorylation by ABL kinases. Mg(2+) is required as a cofactor. It depends on Mn(2+) as a cofactor. Phosphorylated at Tyr-261 by ABL1 in response to oxidative stress. Phosphorylated by PDGFRB. Post-translationally, polyubiquitinated. Polyubiquitination of ABL2 leads to degradation. As to expression, most abundant in adult mouse brain, especially in synapse-rich regions.

It is found in the cytoplasm. The protein localises to the cytoskeleton. It carries out the reaction L-tyrosyl-[protein] + ATP = O-phospho-L-tyrosyl-[protein] + ADP + H(+). Its activity is regulated as follows. Stabilized in the inactive form by an association between the SH3 domain and the SH2-TK linker region, interactions of the N-terminal cap, and contributions from an N-terminal myristoyl group and phospholipids. Activated by autophosphorylation as well as by SRC-family kinase-mediated phosphorylation. Activated by RIN1 binding to the SH2 and SH3 domains. Inhibited by imatinib mesylate (Gleevec). Phosphatidylinositol 4,5-bisphosphate (PIP2), a highly abundant phosphoinositide known to regulate cytoskeletal and membrane proteins, inhibits the tyrosine kinase activity. Its function is as follows. Non-receptor tyrosine-protein kinase that plays an ABL1-overlapping role in key processes linked to cell growth and survival such as cytoskeleton remodeling in response to extracellular stimuli, cell motility and adhesion, receptor endocytosis, autophagy, DNA damage response and apoptosis. Coordinates actin remodeling through tyrosine phosphorylation of proteins controlling cytoskeleton dynamics like MYH10 (involved in movement); CTTN (involved in signaling); or TUBA1 and TUBB (microtubule subunits). Binds directly F-actin and regulates actin cytoskeletal structure through its F-actin-bundling activity. Involved in the regulation of cell adhesion and motility through phosphorylation of key regulators of these processes such as CRK, CRKL or DOK1. Required for adhesion-dependent phosphorylation of ARHGAP35 which promotes its association with RASA1, resulting in recruitment of ARHGAP35 to the cell periphery where it inhibits RHO. Phosphorylates multiple receptor tyrosine kinases like PDGFRB and other substrates which are involved in endocytosis regulation such as RIN1. In brain, may regulate neurotransmission by phosphorylating proteins at the synapse. Finally, functions as its own regulator through autocatalytic activity as well as through phosphorylation of its inhibitor, ABI1. Positively regulates chemokine-mediated T-cell migration, polarization, and homing to lymph nodes and immune-challenged tissues, potentially via activation of NEDD9/HEF1 and RAP1. The polypeptide is Tyrosine-protein kinase ABL2 (Mus musculus (Mouse)).